The chain runs to 199 residues: MNSVGRRNNRRRNGPRRARRVSAVRRMVVVQPNRAGPKRRARRRTRGGGANLISGPAGRTEVFVFSVNDLKANSSGTIKFGPDLSQCPALSGGILKSYHRYKITNVKVEFKSHASASTVGAMFIELDTSCSQSALGSYINSFTISKSATKTFTAQQIDGKEFRESTVNQFYMLYKANGSTSDTAGQFIITIRVANMTPK.

Disordered regions lie at residues 1-21 (MNSV…ARRV) and 33-52 (NRAG…GANL). Composition is skewed to basic residues over residues 7-21 (RNNR…ARRV) and 36-46 (GPKRRARRRTR).

This sequence belongs to the luteoviruses capsid protein family.

Its subcellular location is the virion. Major capsid protein. The chain is Major capsid protein from Avena byzantina (Oat).